The following is a 336-amino-acid chain: Potassium channel subfamily K member 1 (336 aa).

At 1 to 20 (MLQSLAGSSCVRLVERHRSA) the chain is on the cytoplasmic side. Residues 21 to 41 (WCFGFLVLGYLLYLVFGAVVF) traverse the membrane as a helical segment. Over 42–103 (SSVELPYEDL…SNASGNWNWD (62 aa)) the chain is Extracellular. Residue N95 is glycosylated (N-linked (GlcNAc...) asparagine). The segment at residues 104–116 (FTSALFFASTVLS) is an intramembrane region (helical). The stretch at 117 to 122 (TTGYGH) is an intramembrane region. The tract at residues 117-122 (TTGYGH) is selectivity filter 1. The Extracellular segment spans residues 123–132 (TVPLSDGGKA). Residues 133 to 156 (FCIIYSVIGIPFTLLFLTAVVQRI) form a helical membrane-spanning segment. The Cytoplasmic segment spans residues 157 to 181 (TVHVTRRPVLYFHIRWGFSKQVVAI). Residues 182–202 (VHAVLLGFVTVSCFFFIPAAV) traverse the membrane as a helical segment. The Extracellular portion of the chain corresponds to 203–211 (FSVLEDDWN). The segment at residues 212 to 224 (FLESFYFCFISLS) is an intramembrane region (helical). The segment at 225 to 230 (TIGLGD) is selectivity filter 2. An intramembrane segment occupies 225 to 231 (TIGLGDY). The Extracellular portion of the chain corresponds to 232 to 243 (VPGEGYNQKFRE). The chain crosses the membrane as a helical span at residues 244–267 (LYKIGITCYLLLGLIAMLVVLETF). Topologically, residues 268 to 336 (CELHELKKFR…SACVDGPANH (69 aa)) are cytoplasmic. A Glycyl lysine isopeptide (Lys-Gly) (interchain with G-Cter in SUMO) cross-link involves residue K274. Residues 293–299 (IIEHDQL) form an important for intracellular retention in recycling endosomes region. At S326 the chain carries Phosphoserine.

Belongs to the two pore domain potassium channel (TC 1.A.1.8) family. Homodimer; disulfide-linked. Heterodimer with KCNK2; disulfide-linked. In astrocytes, forms mostly heterodimeric potassium channels with KCNK2, with only a minor proportion of functional channels containing homodimeric KCNK1. Interacts with KCNK3 and KCNK9, forming functional heterodimeric channels. Interacts with GNG4. Identified in a complex with PSD and ARF6; interacts only with PSD that is bound to ARF6. Interacts with UBE2I. Sumoylation is controversial. Sumoylated by UBE2I. Not sumoylated when expressed in xenopus oocytes or mammalian cells. Sumoylation inactivates the channel, but does not interfere with expression at the cell membrane. Sumoylation of a single subunit is sufficient to silence the dimeric channel. Sumoylation of KCNK1 is sufficient to silence heterodimeric channels formed by KCNK1 and KCNK3 or KCNK9. Desumoylated by SENP1; this activates the channel. Desumoylated by SENP1; this strongly increases halothane-mediated activation of heterodimeric channels formed with KCNK9. SENP1 treatment has no effect. In terms of tissue distribution, detected in bronchial epithelial cells. Detected in heart left atrium and left ventricle. Detected in cardiac myocytes (at protein level). Widely expressed with high levels in heart, brain and kidney, and lower levels in colon, ovary, placenta, lung and liver. Highly expressed in cerebellum, and detected at lower levels in amygdala, caudate nucleus, brain cortex, hippocampus, putamen, substantia nigra, thalamus, dorsal root ganglion, spinal cord, pituitary, heart, kidney, lung, placenta, pancreas, stomach, small intestine, uterus and prostate. Detected in right and left heart ventricle and atrium, and in heart Purkinje fibers.

It localises to the cell membrane. Its subcellular location is the recycling endosome. The protein localises to the synaptic cell membrane. It is found in the cytoplasmic vesicle. The protein resides in the perikaryon. It localises to the cell projection. Its subcellular location is the dendrite. The protein localises to the apical cell membrane. It catalyses the reaction K(+)(in) = K(+)(out). It carries out the reaction NH4(+)(in) = NH4(+)(out). The enzyme catalyses Na(+)(in) = Na(+)(out). The catalysed reaction is Rb(+)(in) = Rb(+)(out). It catalyses the reaction Cs(+)(in) = Cs(+)(out). It carries out the reaction Li(+)(in) = Li(+)(out). The enzyme catalyses L-glutamate(out) = L-glutamate(in). The catalysed reaction is chloride(in) = chloride(out). With respect to regulation, inhibited by Ba(2+) ions and quinidine. Inhibited by quinine. Is slightly inhibited by 10 mM tetraethylammonium (TEA), and only marginally inhibited by 4-aminopyridine, charybdotoxin and dendrotoxin. Lowering the extracellular pH to below 6.5 transiently activates the channel, and then inhibits channel activity. Inhibited when the intracellular pH is decreased down to pH 6.0, but this may be due to indirect effects. In terms of biological role, ion channel that contributes to passive transmembrane potassium transport and to the regulation of the resting membrane potential in brain astrocytes, but also in kidney and in other tissues. Forms dimeric channels through which potassium ions pass in accordance with their electrochemical gradient. The channel is selective for K(+) ions at physiological potassium concentrations and at neutral pH, but becomes permeable to Na(+) at subphysiological K(+) levels and upon acidification of the extracellular medium. The homodimer has very low potassium channel activity, when expressed in heterologous systems, and can function as weakly inward rectifying potassium channel. Channel activity is modulated by activation of serotonin receptors. Heterodimeric channels containing KCNK1 and KCNK2 have much higher activity, and may represent the predominant form in astrocytes. Heterodimeric channels containing KCNK1 and KCNK3 or KCNK9 have much higher activity. Heterodimeric channels formed by KCNK1 and KCNK9 may contribute to halothane-sensitive currents. Mediates outward rectifying potassium currents in dentate gyrus granule cells and contributes to the regulation of their resting membrane potential. Contributes to the regulation of action potential firing in dentate gyrus granule cells and down-regulates their intrinsic excitability. In astrocytes, the heterodimer formed by KCNK1 and KCNK2 is required for rapid glutamate release in response to activation of G-protein coupled receptors, such as F2R and CNR1. Required for normal ion and water transport in the kidney. Contributes to the regulation of the resting membrane potential of pancreatic beta cells. The low channel activity of homodimeric KCNK1 may be due to sumoylation. The low channel activity may be due to rapid internalization from the cell membrane and retention in recycling endosomes. Permeable to monovalent cations with ion selectivity for K(+) &gt; Rb(+) &gt;&gt; NH4(+) &gt;&gt; Cs(+) = Na(+) = Li(+). The sequence is that of Potassium channel subfamily K member 1 (KCNK1) from Homo sapiens (Human).